We begin with the raw amino-acid sequence, 803 residues long: Nuclear factor of activated T-cells, cytoplasmic 1 (803 aa).

The tract at residues 101-106 (PRIEIT) is calcineurin-binding. The tract at residues 109-199 (LGLHHNSSQF…CVSPKTTDPE (91 aa)) is transactivation domain A (TAD-A). The span at 181-195 (PQTSPWQSPCVSPKT) shows a compositional bias: polar residues. Positions 181 to 279 (PQTSPWQSPC…GSPRVSVTDD (99 aa)) are disordered. 2 consecutive repeat copies span residues 184 to 200 (SPWQ…DPEE) and 214 to 230 (SPRH…VTEE). The interval 184–279 (SPWQSPCVSP…GSPRVSVTDD (96 aa)) is 3 X SP repeats. Phosphoserine occurs at positions 214 and 218. Low complexity predominate over residues 214–231 (SPRHSPSTSPRTSVTEES). A Phosphoserine; by PKA modification is found at serine 226. Residues 246–248 (KRK) carry the Nuclear localization signal motif. Residues 263-279 (SPTPSPQGSPRVSVTDD) form repeat 3. Serine 275 carries the phosphoserine; by PKA modification. Positions 291-302 (SAIVAAINALST) match the Nuclear export signal motif. The 183-residue stretch at 389–571 (PSLPALDWQL…NPIECSQRSA (183 aa)) folds into the RHD domain. Residues 418 to 425 (RAHYETEG) mediate DNA binding. The Nuclear localization signal motif lies at 661 to 663 (KRK). The segment at 723–803 (LMPGFPPRPQ…QPQVSPTSSG (81 aa)) is disordered. Pro residues predominate over residues 778 to 792 (SGVPPGPPQPPPPTL). The segment covering 793 to 803 (LQPQVSPTSSG) has biased composition (low complexity).

Member of the multicomponent NFATC transcription complex that consists of at least two components, a pre-existing cytoplasmic component NFATC2 and an inducible nuclear component NFATC1. Other members such as NFATC4, NFATC3 or members of the activating protein-1 family, MAF, GATA4 and Cbp/p300 can also bind the complex. NFATC proteins bind to DNA as monomers. Interacts with HOMER2 and HOMER3; this interaction may compete with calcineurin/PPP3CA-binding and hence prevent NFATC1 dephosphorylation and activation. Interacts with TLE6/GRG6. Post-translationally, phosphorylated by NFATC-kinase and GSK3B; phosphorylation induces NFATC1 nuclear exit and dephosphorylation by calcineurin promotes nuclear import. Phosphorylation by PKA and DYRK2 negatively modulates nuclear accumulation, and promotes subsequent phosphorylation by GSK3B or casein kinase 1.

Its subcellular location is the cytoplasm. It is found in the nucleus. Plays a role in the inducible expression of cytokine genes in T-cells, especially in the induction of the IL-2 or IL-4 gene transcription. Also controls gene expression in embryonic cardiac cells. Could regulate not only the activation and proliferation but also the differentiation and programmed death of T-lymphocytes as well as lymphoid and non-lymphoid cells. Required for osteoclastogenesis and regulates many genes important for osteoclast differentiation and function. The protein is Nuclear factor of activated T-cells, cytoplasmic 1 of Bos taurus (Bovine).